Consider the following 762-residue polypeptide: MSTFVNDTVEDAIKTPELDQPFEALGLKDDEYARIKEILGRRPTDAELTVYSVMWSEHCSYKSSKVHLRYFGETTTEEMASKILAGIGENAGVVDIGDGNAVTFRVESHNHPSFVEPHQGAATGIGGIVRDIMAMGARPIAVMDQLRFGALDNPDTQRVLPGVVDGISHYGNCLGLPNIGGETVFDDSYAGNPLVNALCVGTLKVEDLKLAFASGTGNKVILFGSRTGLDGIGGVSVLGSASFEEGEERKLPAVQVGDPFAEKVLIECCLELYKAGVVVGIQDLGGGGLACATSELAAAGDGGMRVNLDNVPLRAENMSAAEILASESQERMCAVVTPENVERFLEICAKWDVTCAEIGEVTDEKDRYVVVHNGEVVIDAPPSTIDEGPVYNRPVARPENQDELQLEGEIARPVDVEDIKAAWLKLVASPALASRAFITEQYDRYVRGNTVQAKNANAGVLRIDEETNRGVAISADASGRYTKLEPNTGAQLALAEAYRNVVSTGARPVAVTNCLNFGSPENAGVMWQFKEAVHGLADGSKLLGIPVSGGNVSFYNQTGDEPILPTPVVGVLGVLDNVEQSIGNVLPSEDNDLYLLGETFDEFGGSIWQQVSGAGLNGLPPVVDLLNEQRLADLFVGSDLFAASHDLSEGGLGQTLAELAIHADKGMDVDLSQIHPSLFTSLFAESASRIVVATNRGEELEKRAAELGVPVFKLGRTNDSAVIAVKGADVEFNISVEELREAWTNTLPEAFGHAVGANAVVG.

Residue histidine 58 is part of the active site. Residues tyrosine 61 and arginine 105 each coordinate ATP. Residue glutamate 107 participates in Mg(2+) binding. Substrate is bound by residues 108-111 (SHNH) and arginine 130. The active-site Proton acceptor is histidine 109. Aspartate 131 contributes to the Mg(2+) binding site. Glutamine 255 contacts substrate. Aspartate 283 contributes to the Mg(2+) binding site. 327–329 (ESQ) contacts substrate. 2 residues coordinate ATP: asparagine 513 and glycine 550. Position 551 (asparagine 551) interacts with Mg(2+). Serine 553 contributes to the substrate binding site.

This sequence belongs to the FGAMS family. Monomer. Part of the FGAM synthase complex composed of 1 PurL, 1 PurQ and 2 PurS subunits.

It is found in the cytoplasm. The catalysed reaction is N(2)-formyl-N(1)-(5-phospho-beta-D-ribosyl)glycinamide + L-glutamine + ATP + H2O = 2-formamido-N(1)-(5-O-phospho-beta-D-ribosyl)acetamidine + L-glutamate + ADP + phosphate + H(+). Its pathway is purine metabolism; IMP biosynthesis via de novo pathway; 5-amino-1-(5-phospho-D-ribosyl)imidazole from N(2)-formyl-N(1)-(5-phospho-D-ribosyl)glycinamide: step 1/2. Its function is as follows. Part of the phosphoribosylformylglycinamidine synthase complex involved in the purines biosynthetic pathway. Catalyzes the ATP-dependent conversion of formylglycinamide ribonucleotide (FGAR) and glutamine to yield formylglycinamidine ribonucleotide (FGAM) and glutamate. The FGAM synthase complex is composed of three subunits. PurQ produces an ammonia molecule by converting glutamine to glutamate. PurL transfers the ammonia molecule to FGAR to form FGAM in an ATP-dependent manner. PurS interacts with PurQ and PurL and is thought to assist in the transfer of the ammonia molecule from PurQ to PurL. This Corynebacterium glutamicum (strain R) protein is Phosphoribosylformylglycinamidine synthase subunit PurL.